We begin with the raw amino-acid sequence, 97 residues long: Large ribosomal subunit protein uL23 (97 aa).

The protein belongs to the universal ribosomal protein uL23 family. As to quaternary structure, part of the 50S ribosomal subunit. Contacts protein L29, and trigger factor when it is bound to the ribosome.

Its function is as follows. One of the early assembly proteins it binds 23S rRNA. One of the proteins that surrounds the polypeptide exit tunnel on the outside of the ribosome. Forms the main docking site for trigger factor binding to the ribosome. This Methylococcus capsulatus (strain ATCC 33009 / NCIMB 11132 / Bath) protein is Large ribosomal subunit protein uL23.